Reading from the N-terminus, the 338-residue chain is Holliday junction branch migration complex subunit RuvB (338 aa).

The large ATPase domain (RuvB-L) stretch occupies residues 4–187; sequence ADKDRLVSGD…FGISEHMAYY (184 aa). Residues Leu26, Arg27, Gly68, Lys71, Thr72, Thr73, 134–136, Arg177, Tyr187, and Arg224 contribute to the ATP site; that span reads EDF. Thr72 contacts Mg(2+). Residues 188 to 258 are small ATPAse domain (RuvB-S); it reads SADDLSEIVK…MVDHALDQLQ (71 aa). Residues 261-338 are head domain (RuvB-H); it reads QQGLDQIDRK…AHMGMSAEQH (78 aa). Arg316 and Arg321 together coordinate DNA.

It belongs to the RuvB family. Homohexamer. Forms an RuvA(8)-RuvB(12)-Holliday junction (HJ) complex. HJ DNA is sandwiched between 2 RuvA tetramers; dsDNA enters through RuvA and exits via RuvB. An RuvB hexamer assembles on each DNA strand where it exits the tetramer. Each RuvB hexamer is contacted by two RuvA subunits (via domain III) on 2 adjacent RuvB subunits; this complex drives branch migration. In the full resolvosome a probable DNA-RuvA(4)-RuvB(12)-RuvC(2) complex forms which resolves the HJ.

It localises to the cytoplasm. The enzyme catalyses ATP + H2O = ADP + phosphate + H(+). The RuvA-RuvB-RuvC complex processes Holliday junction (HJ) DNA during genetic recombination and DNA repair, while the RuvA-RuvB complex plays an important role in the rescue of blocked DNA replication forks via replication fork reversal (RFR). RuvA specifically binds to HJ cruciform DNA, conferring on it an open structure. The RuvB hexamer acts as an ATP-dependent pump, pulling dsDNA into and through the RuvAB complex. RuvB forms 2 homohexamers on either side of HJ DNA bound by 1 or 2 RuvA tetramers; 4 subunits per hexamer contact DNA at a time. Coordinated motions by a converter formed by DNA-disengaged RuvB subunits stimulates ATP hydrolysis and nucleotide exchange. Immobilization of the converter enables RuvB to convert the ATP-contained energy into a lever motion, pulling 2 nucleotides of DNA out of the RuvA tetramer per ATP hydrolyzed, thus driving DNA branch migration. The RuvB motors rotate together with the DNA substrate, which together with the progressing nucleotide cycle form the mechanistic basis for DNA recombination by continuous HJ branch migration. Branch migration allows RuvC to scan DNA until it finds its consensus sequence, where it cleaves and resolves cruciform DNA. This Lacticaseibacillus paracasei (strain ATCC 334 / BCRC 17002 / CCUG 31169 / CIP 107868 / KCTC 3260 / NRRL B-441) (Lactobacillus paracasei) protein is Holliday junction branch migration complex subunit RuvB.